The chain runs to 418 residues: Lactosylceramide alpha-2,3-sialyltransferase (418 aa).

The tract at residues 1–25 (MRTKAAGCAERRPLQPRTEAAAAPA) is disordered. Topologically, residues 1–61 (MRTKAAGCAE…RAQSKMRRPS (61 aa)) are cytoplasmic. A helical; Signal-anchor for type II membrane protein membrane pass occupies residues 62-82 (LLLKDILKCTLLVFGVWILYI). Residues 83–418 (LKLNYTTEEC…DLSGGIDREF (336 aa)) are Lumenal-facing. Asn86, Asn236, and Asn390 each carry an N-linked (GlcNAc...) asparagine glycan. A disulfide bridge connects residues Cys195 and Cys353.

Belongs to the glycosyltransferase 29 family. Post-translationally, N-glycosylated. In terms of tissue distribution, ubiquitous. High expression in brain, skeletal muscle, placenta, and testis. mRNA widely distributed in human brain, but slightly elevated expression was observed in the cerebral cortex, temporal lobe, and putamen.

Its subcellular location is the golgi apparatus membrane. It catalyses the reaction a beta-D-Gal-(1-&gt;4)-beta-D-Glc-(1&lt;-&gt;1)-Cer(d18:1(4E)) + CMP-N-acetyl-beta-neuraminate = a ganglioside GM3 (d18:1(4E)) + CMP + H(+). The enzyme catalyses ganglioside GA2 (d18:1(4E)/18:0) + CMP-N-acetyl-beta-neuraminate = ganglioside GM2 (d18:1(4E)/18:0) + CMP + H(+). The catalysed reaction is a beta-D-Gal-(1&lt;-&gt;1')-ceramide + CMP-N-acetyl-beta-neuraminate = N-acetyl-alpha-neuraminosyl-(2-&gt;3)-beta-D-galactosyl-(1&lt;-&gt;1')-ceramide + CMP + H(+). It carries out the reaction a beta-D-galactosyl-(1&lt;-&gt;1')-N-acylsphing-4-enine + CMP-N-acetyl-beta-neuraminate = a ganglioside GM4 (d18:1(4E)) + CMP + H(+). It catalyses the reaction ganglioside GA1 (d18:1(4E)/18:0) + CMP-N-acetyl-beta-neuraminate = ganglioside GM1 (d18:1(4E)/18:0) + CMP + H(+). Its pathway is glycolipid biosynthesis. Functionally, transfers the sialyl group (N-acetyl-alpha-neuraminyl or NeuAc) from CMP-NeuAc to the non-reducing terminal galactose (Gal) of glycosphingolipids forming gangliosides (important molecules involved in the regulation of multiple cellular processes, including cell proliferation and differentiation, apoptosis, embryogenesis, development, and oncogenesis). Mainly involved in the biosynthesis of ganglioside GM3 but can also use different glycolipids as substrate acceptors such as D-galactosylceramide (GalCer), asialo-GM2 (GA2) and asialo-GM1 (GA1), although less preferentially than beta-D-Gal-(1-&gt;4)-beta-D-Glc-(1&lt;-&gt;1)-Cer (LacCer). The protein is Lactosylceramide alpha-2,3-sialyltransferase (ST3GAL5) of Homo sapiens (Human).